We begin with the raw amino-acid sequence, 556 residues long: MSEADARPSNFIRQIIDKDLADGKHTSVHTRFPPEPNGYLHIGHAKSICLNFGIAQDYQGQCNLRFDDTNPEKEDIEYVESIKKDVNWLGFEWDGEVCYSSNYFDKLYEYAIELINKGLAYVDELSPEQIREYRGTLTAPGKPSPYRDRPIEENLALFEKMRAGEFEEGKACLRAKIDMGSSFMVMRDPVIYRVRFATHHQTGDKWCIYPMYDFTHCISDALEGITHSICTLEFMDNRRLYDWVLDNITIDCRPHQYEFSRLNLEYTVMSKRKLNQLVTEKLVDGWDDPRMPTVSGLRRRGFTSASIREFCKRIGVTKQENMIEFGSLESCIRDDLNENAPRAMAVLDPVKIVIENFEEGAVETLTVANHPNKPEMGEREVPFTREVWIEREDFREEANKKYKRLVLGKEVRLRGAYVIKAERIEKDAEGNITTIFCTYDAETLGKNPADGRKVKGVIHWVSADKALPAEIRLYDRLFTVPNPAAADDFAATINPESLVILNGFVEPSLAASEAEKGYQFERMGYFCADSKDSSADNLVFNRTVGLRDTWAKIENQ.

The 'HIGH' region signature appears at Pro34 to His44. ATP-binding positions include Glu35–Asn37 and His41–Ser47. The L-glutamine site is built by Asp67 and Tyr212. Residues Thr231, Arg261 to Leu262, and Met269 to Lys271 contribute to the ATP site. Positions Val268–Arg272 match the 'KMSKS' region motif.

This sequence belongs to the class-I aminoacyl-tRNA synthetase family. Monomer.

Its subcellular location is the cytoplasm. The catalysed reaction is tRNA(Gln) + L-glutamine + ATP = L-glutaminyl-tRNA(Gln) + AMP + diphosphate. The sequence is that of Glutamine--tRNA ligase from Vibrio campbellii (strain ATCC BAA-1116).